The chain runs to 364 residues: Poly(3-hydroxyalkanoate) polymerase subunit PhaE (364 aa).

Residues 322–364 (SGKTPTTALKAPAPATKATEKPATRATTRRKTAAKPTGGTADD) form a disordered region. Residues 324-338 (KTPTTALKAPAPATK) are compositionally biased toward low complexity.

It belongs to the PHA/PHB synthase family. Type III PhaE subfamily. As to quaternary structure, forms a heterodimer with PhaC, which may multimerize in the presence of 3-hydroxybutyryl-CoA.

Its subcellular location is the cytoplasm. The protein operates within biopolymer metabolism; poly-(R)-3-hydroxybutanoate biosynthesis. Its function is as follows. Polymerizes D(-)-3-hydroxybutyryl-CoA to create polyhydroxybutyrate (PHB) which consists of thousands of hydroxybutyrate molecules linked end to end. This subunit has no catalytic activity but enhances the activity of PhaC, the catalytic subunit. The chain is Poly(3-hydroxyalkanoate) polymerase subunit PhaE from Thiocystis violacea.